Reading from the N-terminus, the 174-residue chain is Gamma-crystallin C (174 aa).

2 consecutive Beta/gamma crystallin 'Greek key' domains span residues 2–40 and 41–83; these read GKIT…RVES and GCWM…CLIP. C23 is subject to S-methylcysteine. Residues 84–87 are connecting peptide; that stretch reads QTGS. 2 Beta/gamma crystallin 'Greek key' domains span residues 88–128 and 129–171; these read HRLR…HVLE and GCWV…RRVV.

This sequence belongs to the beta/gamma-crystallin family. As to quaternary structure, monomer.

Functionally, crystallins are the dominant structural components of the vertebrate eye lens. This chain is Gamma-crystallin C (CRYGC), found in Macaca mulatta (Rhesus macaque).